The chain runs to 110 residues: Large ribosomal subunit protein uL22 (110 aa).

The protein belongs to the universal ribosomal protein uL22 family. Part of the 50S ribosomal subunit.

Its function is as follows. This protein binds specifically to 23S rRNA; its binding is stimulated by other ribosomal proteins, e.g. L4, L17, and L20. It is important during the early stages of 50S assembly. It makes multiple contacts with different domains of the 23S rRNA in the assembled 50S subunit and ribosome. In terms of biological role, the globular domain of the protein is located near the polypeptide exit tunnel on the outside of the subunit, while an extended beta-hairpin is found that lines the wall of the exit tunnel in the center of the 70S ribosome. This is Large ribosomal subunit protein uL22 from Dichelobacter nodosus (strain VCS1703A).